Here is a 402-residue protein sequence, read N- to C-terminus: Plasminogen activator inhibitor 1 (402 aa).

The signal sequence occupies residues 1–23; sequence MQMSPALTCLVLGLALVFGEGSA. 3 N-linked (GlcNAc...) asparagine glycosylation sites follow: Asn-232, Asn-288, and Asn-352.

This sequence belongs to the serpin family. In terms of assembly, forms a heterodimer with TMPRSS7. Interacts with VTN. Binds LRP1B; binding is followed by internalization and degradation. Interacts with PPP1CB. In complex with PLAU/uPA, interacts with PLAUR/uPAR. Interacts with SORL1 and LRP1, either alone or in complex with PLAU; these interactions are abolished in the presence of LRPAP1/RAP. The ternary complex composed of PLAUR-PLAU-PAI1 also interacts with SORL1. Interacts with PLAT/tPA. Also interacts with SORL1, when complexed to PLAT/tPA. Inactivated by proteolytic attack of the urokinase-type (u-PA) and the tissue-type (TPA), cleaving the 369-Arg-|-Met-370 bond. In terms of tissue distribution, expressed in endothelial cells. Found in plasma, platelets, and hepatoma and fibrosarcoma cells.

Its subcellular location is the secreted. In terms of biological role, serine protease inhibitor. Inhibits TMPRSS7. Is a primary inhibitor of tissue-type plasminogen activator (PLAT) and urokinase-type plasminogen activator (PLAU). As PLAT inhibitor, it is required for fibrinolysis down-regulation and is responsible for the controlled degradation of blood clots. As PLAU inhibitor, it is involved in the regulation of cell adhesion and spreading. Acts as a regulator of cell migration, independently of its role as protease inhibitor. It is required for stimulation of keratinocyte migration during cutaneous injury repair. It is involved in cellular and replicative senescence. Plays a role in alveolar type 2 cells senescence in the lung. Is involved in the regulation of cementogenic differentiation of periodontal ligament stem cells, and regulates odontoblast differentiation and dentin formation during odontogenesis. This chain is Plasminogen activator inhibitor 1 (SERPINE1), found in Homo sapiens (Human).